A 393-amino-acid chain; its full sequence is Acyltransferase ato1 (393 aa).

This sequence belongs to the lysine N-acyltransferase mbtK family.

The protein operates within siderophore biosynthesis; ferrichrome biosynthesis. Functionally, L-ornithine N(5)-monooxygenase; part of the siderophore biosynthetic pathway. Omphalotus olearius produces ferrichrome A, but no other siderophore has been detected. Ferrichrome A consists of a hexapeptide ring made up of one glycine, two serine, and three N(5)-hydroxyornithine amino acid residues, the latter acylated by trans-(alpha-methyl)-glutaconic acid residues. The biosynthesis of ferrichrome A depends on the hydroxylation of ornithine to N(5)-hydroxyornithine, catalyzed by the monooxygenase omo1. The second step, the acylation of N(5)-hydroxy-L-ornithine is probably catalyzed by the N-acyltransferase ato1. Finally, assembly of ferrichrome A is catalyzed by the nonribosomal peptide synthase (NRPS) fso1. This chain is Acyltransferase ato1, found in Omphalotus olearius (Jack o'lantern).